The sequence spans 1487 residues: MPPQPPPAASASASAPDPAVPAWLRGLPRAPEYRPTESEFADPIAFLSRVEREAAAYGICKVIPPHPRPSRRFVFAHLNRSLVSSCDAPAPSPAAASDSSIPPSSSSPPPVSAAVFTTRHQELGNPRRGRPTPQVLKQVWQSGERYTLDQFESKSRAFSKTHLAGLHEPTALAVESLFWKASADRPIYIEYANDVPGSGFAAPVQLQRKKKQKRETAPMDEWEKSSGWRLSNSPWNLQAIARAPGSLTRFMPDDVPGVTSPMVYIGMLFSWFAWHVEDHDLHSLNFLHTGAPKTWYAVPGDRAVELEEVIRVHGYGGNTDRIASLAVLGEKTTLMSPEVLIDNGVPCCRLVQYPGEFVVTFPRAYHVGFSHGFNCGEAANFATPQWLKFAKEAAVRRAVMNYLPMLSHQQLLYLLAVSFISRNPRELLSGIRTSRLRDRKKEDRELLVKQEFLQDMISENELICSFLGKKSVDNVVLWEPDLLPSLTALHPCSSCSKAPEKKGEDGPRIGSTQSSSKDDSSSDGTACMTGTQSKGLSMDSKQAPEGEKLDTDDGDDLPFDLSIDSGSLTCVACGILGYPFMAILQPSRKALEEISLVDKERYKLSCEKEICSNVLPCSPNDGSSGCPLIANRSSSPVENANLSHQDVKPIRSDISLMGKEFNGTLGKHIGTSCSCSSENTIHPYGDTETPEKKIPSDCPGSELSKQSGRGDVNVPDVEGSEETISWNTGCAFARPRIFCLQHALEIEELLASKGGVHALIICHADYVKLKALAISIAEEIEFQFDYKDVALANASKSNLHLINISIDDEGYEEEGTDWTSRMGLNLKHSSKIRKETPESQEQPPLSFWGLFSKPSPISVVSNLKWLCRKARTPYKVIGYASSPDVVATPDKVKPAVTKTQIDTSGNAHENIGSEQTLQQDCVLQESNDVADMCKRPKVNDQDGHSLINIPIAVAEYPMMHQVCERPVSVSACDDPICSFDSQDSPTTVAVSAGKPTREQCGAESTELSTVKQFLDNGLIAEGGSMNFISNHEHLESDNATSVCKDEQLQVQQDQLAMVLCNNPNTELVAGELHGGAASSTLENEDSCGNTSYCSDTVLKNSEPDTDDQPETCDRSVVLVTPKSSCDQMISSSDRSCSLTLDCPVSTDAAFSSEKLSMAHDLMGSELQAVHNSKAEVVASLTDVKGAKLNSIHTTQLPHESPSSDFIISEGAQSASTTAIPRKNGTSMHTESNSIDILLGVLADESKVSSGKDEVGKASLTLMTLAGNDQSADDVTQDEVAEITDPSHGFCSSDIVSRSIGSSNRTNIICYARRKHKRKSGSEFNINSPQSLGSFVRSPCESLRPRTRPAIVEDMTNETKTAEASTANKRKKAKVEAFQCDIEFCDMTFETKAELRAHQRNICTDESCGKRFSSHKYLKRHQCVHRDERPFKCPWDGCPMTFKWLWAQTEHIRVHTGERPYKCSAPDCGQSFRYVSDYSRHRKKFNHY.

A disordered region spans residues 1-23; that stretch reads MPPQPPPAASASASAPDPAVPAW. Over residues 9–22 the composition is skewed to low complexity; it reads ASASASAPDPAVPA. The region spanning 30 to 71 is the JmjN domain; sequence APEYRPTESEFADPIAFLSRVEREAAAYGICKVIPPHPRPSR. Residues 86 to 104 are compositionally biased toward low complexity; it reads CDAPAPSPAAASDSSIPPS. Residues 86–113 are disordered; it reads CDAPAPSPAAASDSSIPPSSSSPPPVSA. Positions 232-398 constitute a JmjC domain; sequence NSPWNLQAIA…FAKEAAVRRA (167 aa). Positions 275, 277, and 366 each coordinate Fe cation. Disordered regions lie at residues 494 to 555 and 684 to 718; these read SCSK…DDGD and YGDTETPEKKIPSDCPGSELSKQSGRGDVNVPDVE. Basic and acidic residues-rich tracts occupy residues 498-507 and 542-551; these read APEKKGEDGP and QAPEGEKLDT. A C2H2-type 1; degenerate zinc finger spans residues 1377-1400; it reads FQCDIEFCDMTFETKAELRAHQRN. 3 C2H2-type zinc fingers span residues 1400-1424, 1430-1454, and 1460-1486; these read NICTDESCGKRFSSHKYLKRHQCVH, FKCPWDGCPMTFKWLWAQTEHIRVH, and YKCSAPDCGQSFRYVSDYSRHRKKFNH.

Fe(2+) serves as cofactor.

Its subcellular location is the nucleus. Its function is as follows. Histone demethylase that demethylates 'Lys-4' (H3K4me) of histone H3. Involved in the control of flowering time. Has a suppressive effect on floral transition under long day conditions through the demethylation of H3K4me3 in the promoter region of the flower-promoting signal HD3B/RFT1. In Oryza sativa subsp. japonica (Rice), this protein is Probable lysine-specific demethylase SE14 (SE14).